The following is a 492-amino-acid chain: Solute carrier family 2, facilitated glucose transporter member 1 (492 aa).

Residue methionine 1 is modified to N-acetylmethionine. Residues 1–11 (MDPSSKKVTGR) are Cytoplasmic-facing. Residues 12 to 33 (LMLAVGGAVLGSLQFGYNTGVI) traverse the membrane as a helical segment. Residues 34 to 66 (NAPQKVIEEFYNQTWNHRYGEPIPSTTLTTLWS) lie on the Extracellular side of the membrane. A glycan (N-linked (GlcNAc...) asparagine) is linked at asparagine 45. A helical transmembrane segment spans residues 67 to 87 (LSVAIFSVGGMIGSFSVGLFV). Residues 88-90 (NRF) lie on the Cytoplasmic side of the membrane. A helical transmembrane segment spans residues 91–112 (GRRNSMLMMNLLAFVAAVLMGF). Residues 113-120 (SKLGKSFE) are Extracellular-facing. A helical membrane pass occupies residues 121–144 (MLILGRFIIGVYCGLTTGFVPMYV). Topologically, residues 145-155 (GEVSPTALRGA) are cytoplasmic. The chain crosses the membrane as a helical span at residues 156–176 (LGTLHQLGIVVGILIAQVFGL). Glutamine 161 lines the D-glucose pocket. The Extracellular segment spans residues 177-185 (DSIMGNADL). A helical transmembrane segment spans residues 186–206 (WPLLLSVIFIPALLQCILLPF). Residues 207–271 (CPESPRFLLI…LFRSPAYRQP (65 aa)) are Cytoplasmic-facing. Position 226 is a phosphoserine (serine 226). A helical transmembrane segment spans residues 272-293 (ILIAVVLQLSQQLSGINAVFYY). Residues 282–283 (QQ) and asparagine 288 contribute to the D-glucose site. The Extracellular segment spans residues 294–306 (STSIFEKAGVQQP). The helical transmembrane segment at 307–328 (VYATIGSGIVNTAFTVVSLFVV) threads the bilayer. Asparagine 317 contributes to the D-glucose binding site. The Cytoplasmic portion of the chain corresponds to 329 to 334 (ERAGRR). Residues 335 to 355 (TLHLIGLAGMAGCAVLMTIAL) form a helical membrane-spanning segment. Residues 356 to 365 (ALLERLPWMS) are Extracellular-facing. Residues 366–388 (YLSIVAIFGFVAFFEVGPGPIPW) form a helical membrane-spanning segment. D-glucose contacts are provided by glutamate 380 and tryptophan 388. At 389–401 (FIVAELFSQGPRP) the chain is on the cytoplasmic side. The helical transmembrane segment at 402 to 422 (AAIAVAGFSNWTSNFIVGMCF) threads the bilayer. Residues 423 to 429 (QYVEQLC) lie on the Extracellular side of the membrane. The chain crosses the membrane as a helical span at residues 430-450 (GPYVFIIFTVLLVLFFIFTYF). Over 451–492 (KVPETKGRTFDEIASGFRQGGASQSDKTPEELFHPLGADSQV) the chain is Cytoplasmic. The residue at position 465 (serine 465) is a Phosphoserine. The interval 468 to 492 (RQGGASQSDKTPEELFHPLGADSQV) is disordered. Threonine 478 carries the phosphothreonine modification. Serine 490 carries the post-translational modification Phosphoserine.

It belongs to the major facilitator superfamily. Sugar transporter (TC 2.A.1.1) family. Glucose transporter subfamily. In terms of assembly, found in a complex with ADD2, DMTN and SLC2A1. Interacts (via C-terminus cytoplasmic region) with DMTN isoform 2. Interacts with SNX27; the interaction is required when endocytosed to prevent degradation in lysosomes and promote recycling to the plasma membrane. Interacts with GIPC (via PDZ domain). Interacts with STOM. Interacts with SGTA (via Gln-rich region). Interacts with isoform 1 of BSG. Interacts with SMIM43; the interaction may promote SLC2A1-mediated glucose transport to meet the energy needs of mesendoderm differentiation. In terms of processing, phosphorylation at Ser-226 by PKC promotes glucose uptake by increasing cell membrane localization. Retina (at protein level).

It localises to the cell membrane. It is found in the photoreceptor inner segment. The catalysed reaction is D-glucose(out) = D-glucose(in). Its activity is regulated as follows. The uptake of glucose is inhibited by cytochalasin B. Glucose uptake is increased in response to phorbol ester 12-O-tetradecanoylphorbol-13-acetate (TPA) treatment: TPA-induced glucose uptake requires phosphorylation at Ser-226. Its function is as follows. Facilitative glucose transporter, which is responsible for constitutive or basal glucose uptake. Has a very broad substrate specificity; can transport a wide range of aldoses including both pentoses and hexoses. Most important energy carrier of the brain: present at the blood-brain barrier and assures the energy-independent, facilitative transport of glucose into the brain. In association with BSG and NXNL1, promotes retinal cone survival by increasing glucose uptake into photoreceptors. Required for mesendoderm differentiation. In Mus musculus (Mouse), this protein is Solute carrier family 2, facilitated glucose transporter member 1.